Consider the following 1088-residue polypeptide: DNA-directed RNA polymerase subunit beta (1088 aa).

The protein belongs to the RNA polymerase beta chain family. As to quaternary structure, in plastids the minimal PEP RNA polymerase catalytic core is composed of four subunits: alpha, beta, beta', and beta''. When a (nuclear-encoded) sigma factor is associated with the core the holoenzyme is formed, which can initiate transcription.

Its subcellular location is the plastid. The protein resides in the chloroplast. The enzyme catalyses RNA(n) + a ribonucleoside 5'-triphosphate = RNA(n+1) + diphosphate. Functionally, DNA-dependent RNA polymerase catalyzes the transcription of DNA into RNA using the four ribonucleoside triphosphates as substrates. In Ostreococcus tauri, this protein is DNA-directed RNA polymerase subunit beta.